The primary structure comprises 242 residues: Uridylate kinase (242 aa).

Position 17-20 (17-20 (KLSG)) interacts with ATP. Residue G59 coordinates UMP. ATP contacts are provided by G60 and R64. UMP contacts are provided by residues D79 and 140 to 147 (LGNPFFTT). Residues T167, Y173, and D176 each contribute to the ATP site.

Belongs to the UMP kinase family. In terms of assembly, homohexamer.

It is found in the cytoplasm. It catalyses the reaction UMP + ATP = UDP + ADP. Its pathway is pyrimidine metabolism; CTP biosynthesis via de novo pathway; UDP from UMP (UMPK route): step 1/1. With respect to regulation, inhibited by UTP. Catalyzes the reversible phosphorylation of UMP to UDP. The protein is Uridylate kinase of Buchnera aphidicola subsp. Baizongia pistaciae (strain Bp).